The sequence spans 242 residues: Ubiquinone biosynthesis O-methyltransferase (242 aa).

Residues arginine 44, glycine 64, aspartate 85, and methionine 129 each coordinate S-adenosyl-L-methionine.

It belongs to the methyltransferase superfamily. UbiG/COQ3 family.

The catalysed reaction is a 3-demethylubiquinol + S-adenosyl-L-methionine = a ubiquinol + S-adenosyl-L-homocysteine + H(+). The enzyme catalyses a 3-(all-trans-polyprenyl)benzene-1,2-diol + S-adenosyl-L-methionine = a 2-methoxy-6-(all-trans-polyprenyl)phenol + S-adenosyl-L-homocysteine + H(+). It functions in the pathway cofactor biosynthesis; ubiquinone biosynthesis. Its function is as follows. O-methyltransferase that catalyzes the 2 O-methylation steps in the ubiquinone biosynthetic pathway. This is Ubiquinone biosynthesis O-methyltransferase from Salmonella paratyphi A (strain ATCC 9150 / SARB42).